The sequence spans 473 residues: Glutamate--tRNA ligase 2 (473 aa).

A 'HIGH' region motif is present at residues Pro-11 to Gly-21. Over residues Lys-113 to Ser-133 the composition is skewed to basic and acidic residues. The segment at Lys-113–Pro-136 is disordered. The 'KMSKS' region signature appears at Lys-240 to Arg-244. Lys-243 lines the ATP pocket.

Belongs to the class-I aminoacyl-tRNA synthetase family. Glutamate--tRNA ligase type 1 subfamily. Monomer.

It localises to the cytoplasm. The catalysed reaction is tRNA(Glu) + L-glutamate + ATP = L-glutamyl-tRNA(Glu) + AMP + diphosphate. Functionally, catalyzes the attachment of glutamate to tRNA(Glu) in a two-step reaction: glutamate is first activated by ATP to form Glu-AMP and then transferred to the acceptor end of tRNA(Glu). In Brucella abortus (strain S19), this protein is Glutamate--tRNA ligase 2.